We begin with the raw amino-acid sequence, 69 residues long: Major cold shock protein CspA (69 aa).

Residues Gly-7–Val-66 form the CSD domain.

The protein localises to the cytoplasm. The sequence is that of Major cold shock protein CspA (cspA) from Pseudomonas aeruginosa (strain ATCC 15692 / DSM 22644 / CIP 104116 / JCM 14847 / LMG 12228 / 1C / PRS 101 / PAO1).